The sequence spans 398 residues: Acetate kinase 2 (398 aa).

Position 7 (asparagine 7) interacts with Mg(2+). Lysine 14 lines the ATP pocket. Residue arginine 91 coordinates substrate. The active-site Proton donor/acceptor is aspartate 148. Residues 208-212 (HLGNG), 283-285 (DFR), and 331-335 (GVGEN) each bind ATP. Glutamate 384 serves as a coordination point for Mg(2+).

The protein belongs to the acetokinase family. Homodimer. The cofactor is Mg(2+). Requires Mn(2+) as cofactor.

The protein resides in the cytoplasm. It catalyses the reaction acetate + ATP = acetyl phosphate + ADP. It functions in the pathway metabolic intermediate biosynthesis; acetyl-CoA biosynthesis; acetyl-CoA from acetate: step 1/2. Catalyzes the formation of acetyl phosphate from acetate and ATP. Can also catalyze the reverse reaction. This chain is Acetate kinase 2, found in Clostridium perfringens (strain 13 / Type A).